We begin with the raw amino-acid sequence, 171 residues long: Transcription elongation factor GreB (171 aa).

The stretch at 53 to 75 (KKRLREIDRRVRFLAKRLEVLKI) forms a coiled coil.

This sequence belongs to the GreA/GreB family. GreB subfamily.

Functionally, necessary for efficient RNA polymerase transcription elongation past template-encoded arresting sites. The arresting sites in DNA have the property of trapping a certain fraction of elongating RNA polymerases that pass through, resulting in locked ternary complexes. Cleavage of the nascent transcript by cleavage factors such as GreA or GreB allows the resumption of elongation from the new 3'terminus. GreB releases sequences of up to 9 nucleotides in length. The sequence is that of Transcription elongation factor GreB from Yersinia pestis.